We begin with the raw amino-acid sequence, 51 residues long: Lipid-anchored plasma membrane protein CPP3 (51 aa).

The disordered stretch occupies residues 1 to 28 (MRHHQNMHYAPQQQPVYVQQPPPRRESG).

This sequence belongs to the CYSTM1 family. In terms of processing, palmitoylated near the C-terminus.

It is found in the cell membrane. This is Lipid-anchored plasma membrane protein CPP3 from Saccharomyces cerevisiae (strain ATCC 204508 / S288c) (Baker's yeast).